Consider the following 397-residue polypeptide: Phosphoglycerate kinase (397 aa).

Substrate contacts are provided by residues 25 to 27 (DLN), R41, 64 to 67 (HLGR), R118, and R151. ATP contacts are provided by residues K202, E324, and 350–353 (GGDT).

The protein belongs to the phosphoglycerate kinase family. In terms of assembly, monomer.

Its subcellular location is the cytoplasm. The enzyme catalyses (2R)-3-phosphoglycerate + ATP = (2R)-3-phospho-glyceroyl phosphate + ADP. The protein operates within carbohydrate degradation; glycolysis; pyruvate from D-glyceraldehyde 3-phosphate: step 2/5. This chain is Phosphoglycerate kinase, found in Albidiferax ferrireducens (strain ATCC BAA-621 / DSM 15236 / T118) (Rhodoferax ferrireducens).